A 362-amino-acid chain; its full sequence is Histidinol-phosphate aminotransferase (362 aa).

The residue at position 210 (lysine 210) is an N6-(pyridoxal phosphate)lysine.

Belongs to the class-II pyridoxal-phosphate-dependent aminotransferase family. Histidinol-phosphate aminotransferase subfamily. Homodimer. The cofactor is pyridoxal 5'-phosphate.

It catalyses the reaction L-histidinol phosphate + 2-oxoglutarate = 3-(imidazol-4-yl)-2-oxopropyl phosphate + L-glutamate. It participates in amino-acid biosynthesis; L-histidine biosynthesis; L-histidine from 5-phospho-alpha-D-ribose 1-diphosphate: step 7/9. The chain is Histidinol-phosphate aminotransferase from Rhodopirellula baltica (strain DSM 10527 / NCIMB 13988 / SH1).